Consider the following 304-residue polypeptide: Dermonecrotic toxin LlSicTox-betaIA1 (304 aa).

An N-terminal signal peptide occupies residues 1–21; the sequence is MLLSAVISFIGFAAFLQEANG. The propeptide occupies 22–26; the sequence is HVVER. The active site involves His-38. Residues Glu-58 and Asp-60 each contribute to the Mg(2+) site. The active-site Nucleophile is His-74. 2 disulfides stabilise this stretch: Cys-78–Cys-84 and Cys-80–Cys-223. Asp-118 contacts Mg(2+).

Belongs to the arthropod phospholipase D family. Class II subfamily. Class IIb sub-subfamily. Mg(2+) is required as a cofactor. In terms of tissue distribution, expressed by the venom gland.

Its subcellular location is the secreted. It carries out the reaction an N-(acyl)-sphingosylphosphocholine = an N-(acyl)-sphingosyl-1,3-cyclic phosphate + choline. The enzyme catalyses an N-(acyl)-sphingosylphosphoethanolamine = an N-(acyl)-sphingosyl-1,3-cyclic phosphate + ethanolamine. The catalysed reaction is a 1-acyl-sn-glycero-3-phosphocholine = a 1-acyl-sn-glycero-2,3-cyclic phosphate + choline. It catalyses the reaction a 1-acyl-sn-glycero-3-phosphoethanolamine = a 1-acyl-sn-glycero-2,3-cyclic phosphate + ethanolamine. Its function is as follows. Dermonecrotic toxins cleave the phosphodiester linkage between the phosphate and headgroup of certain phospholipids (sphingolipid and lysolipid substrates), forming an alcohol (often choline) and a cyclic phosphate. This toxin acts on sphingomyelin (SM) with low activity. It may also act on ceramide phosphoethanolamine (CPE), lysophosphatidylcholine (LPC) and lysophosphatidylethanolamine (LPE), but not on lysophosphatidylserine (LPS), and lysophosphatidylglycerol (LPG). It acts by transphosphatidylation, releasing exclusively cyclic phosphate products as second products. Induces hemolysis, dermonecrosis, and edema. Also induces platelet aggregation. This Loxosceles laeta (South American recluse spider) protein is Dermonecrotic toxin LlSicTox-betaIA1.